The primary structure comprises 288 residues: Polyamine aminopropyltransferase (288 aa).

Positions 9 to 238 (ETLHDQFGQY…GIMTFAWATD (230 aa)) constitute a PABS domain. Q33 serves as a coordination point for S-methyl-5'-thioadenosine. Spermidine is bound by residues H64 and D88. Residues E108 and 140-141 (DG) each bind S-methyl-5'-thioadenosine. D158 acts as the Proton acceptor in catalysis. 158–161 (DCTD) is a spermidine binding site. An S-methyl-5'-thioadenosine-binding site is contributed by P165.

The protein belongs to the spermidine/spermine synthase family. In terms of assembly, homodimer or homotetramer.

It localises to the cytoplasm. It carries out the reaction S-adenosyl 3-(methylsulfanyl)propylamine + putrescine = S-methyl-5'-thioadenosine + spermidine + H(+). The protein operates within amine and polyamine biosynthesis; spermidine biosynthesis; spermidine from putrescine: step 1/1. In terms of biological role, catalyzes the irreversible transfer of a propylamine group from the amino donor S-adenosylmethioninamine (decarboxy-AdoMet) to putrescine (1,4-diaminobutane) to yield spermidine. This is Polyamine aminopropyltransferase from Escherichia fergusonii (strain ATCC 35469 / DSM 13698 / CCUG 18766 / IAM 14443 / JCM 21226 / LMG 7866 / NBRC 102419 / NCTC 12128 / CDC 0568-73).